A 179-amino-acid chain; its full sequence is Adenine phosphoribosyltransferase (179 aa).

This sequence belongs to the purine/pyrimidine phosphoribosyltransferase family. As to quaternary structure, homodimer.

It localises to the cytoplasm. The catalysed reaction is AMP + diphosphate = 5-phospho-alpha-D-ribose 1-diphosphate + adenine. Its pathway is purine metabolism; AMP biosynthesis via salvage pathway; AMP from adenine: step 1/1. In terms of biological role, catalyzes a salvage reaction resulting in the formation of AMP, that is energically less costly than de novo synthesis. This Haemophilus ducreyi (strain 35000HP / ATCC 700724) protein is Adenine phosphoribosyltransferase.